Consider the following 667-residue polypeptide: Protein-glutamine gamma-glutamyltransferase 4 (667 aa).

N-linked (GlcNAc...) asparagine glycosylation is found at asparagine 151, asparagine 220, and asparagine 227. Residues cysteine 256, histidine 315, and aspartate 338 contribute to the active site. Ca(2+) is bound by residues asparagine 378 and aspartate 380. An N-linked (GlcNAc...) asparagine glycan is attached at asparagine 408. Positions 430 and 435 each coordinate Ca(2+). The segment at glutamate 430–aspartate 449 is disordered. Residues asparagine 472 and asparagine 488 are each glycosylated (N-linked (GlcNAc...) asparagine).

Belongs to the transglutaminase superfamily. Transglutaminase family. Homodimer. Requires Ca(2+) as cofactor. Post-translationally, the N-terminus is blocked. Probably linked to the cell membrane via a lipid-anchor, possibly a GPI-anchor. In terms of processing, N-glycosylated on 2 Asn residues by a high mannose oligosaccharide consisting of five mannose residues and a fucosylated biantennary complex glycan. Expressed in the coagulating gland, the dorsal part of the prostate and in semen (at protein level). Expressed at low levels in the lateral prostate and seminal vesicle. Not expressed in the epididymis, kidney, liver, serum, sperm plug, testes and ventral prostate.

Its subcellular location is the secreted. The protein localises to the cell membrane. It carries out the reaction L-glutaminyl-[protein] + L-lysyl-[protein] = [protein]-L-lysyl-N(6)-5-L-glutamyl-[protein] + NH4(+). Associated with the mammalian reproductive process. Plays an important role in the formation of the seminal coagulum through the cross-linking of specific proteins present in the seminal plasma. Transglutaminase is also required to stabilize the copulatory plug. The polypeptide is Protein-glutamine gamma-glutamyltransferase 4 (Tgm4) (Rattus norvegicus (Rat)).